Consider the following 134-residue polypeptide: Profilin-3 (134 aa).

Cysteines 13 and 118 form a disulfide. The Involved in PIP2 interaction signature appears at 84–100 (AVIRGKKGSGGITIKKT). Thr114 carries the post-translational modification Phosphothreonine.

It belongs to the profilin family. Occurs in many kinds of cells as a complex with monomeric actin in a 1:1 ratio. In terms of processing, phosphorylated by MAP kinases.

The protein resides in the cytoplasm. The protein localises to the cytoskeleton. Functionally, binds to actin and affects the structure of the cytoskeleton. At high concentrations, profilin prevents the polymerization of actin, whereas it enhances it at low concentrations. The polypeptide is Profilin-3 (Olea europaea (Common olive)).